The chain runs to 141 residues: Hemoglobin subunit alpha (141 aa).

A Globin domain is found at 1-141 (VLSAEDKANV…VSTVLTSKYR (141 aa)). The residue at position 3 (Ser3) is a Phosphoserine. N6-succinyllysine occurs at positions 7 and 11. Lys16 carries the N6-acetyllysine; alternate modification. Lys16 carries the N6-succinyllysine; alternate modification. Tyr24 is modified (phosphotyrosine). Position 35 is a phosphoserine (Ser35). Residue Lys40 is modified to N6-succinyllysine. Ser49 is modified (phosphoserine). His58 lines the O2 pocket. A heme b-binding site is contributed by His87. Ser102 bears the Phosphoserine mark. Position 108 is a phosphothreonine (Thr108). 2 positions are modified to phosphoserine: Ser124 and Ser131. Phosphothreonine is present on residues Thr134 and Thr137. Residue Ser138 is modified to Phosphoserine.

The protein belongs to the globin family. In terms of assembly, heterotetramer of two alpha chains and two beta chains. In terms of tissue distribution, red blood cells.

Functionally, involved in oxygen transport from the lung to the various peripheral tissues. The chain is Hemoglobin subunit alpha from Peromyscus crinitus (Canyon mouse).